We begin with the raw amino-acid sequence, 430 residues long: Adenylosuccinate synthetase (430 aa).

GTP-binding positions include glycine 13–lysine 19 and glycine 41–threonine 43. Aspartate 14 functions as the Proton acceptor in the catalytic mechanism. Aspartate 14 and glycine 41 together coordinate Mg(2+). IMP contacts are provided by residues aspartate 14 to lysine 17, asparagine 39 to histidine 42, threonine 130, arginine 144, glutamine 225, threonine 240, and arginine 304. Histidine 42 serves as the catalytic Proton donor. A substrate-binding site is contributed by alanine 300–arginine 306. GTP contacts are provided by residues arginine 306, lysine 332–aspartate 334, and serine 414–glycine 416.

The protein belongs to the adenylosuccinate synthetase family. Homodimer. The cofactor is Mg(2+).

Its subcellular location is the cytoplasm. The enzyme catalyses IMP + L-aspartate + GTP = N(6)-(1,2-dicarboxyethyl)-AMP + GDP + phosphate + 2 H(+). It participates in purine metabolism; AMP biosynthesis via de novo pathway; AMP from IMP: step 1/2. Functionally, plays an important role in the de novo pathway of purine nucleotide biosynthesis. Catalyzes the first committed step in the biosynthesis of AMP from IMP. In Xanthomonas oryzae pv. oryzae (strain MAFF 311018), this protein is Adenylosuccinate synthetase.